A 408-amino-acid polypeptide reads, in one-letter code: Bifunctional enzyme IspD/IspF (408 aa).

A 2-C-methyl-D-erythritol 4-phosphate cytidylyltransferase region spans residues 1 to 247; that stretch reads MNAPFEKDRR…GPAMTELPDI (247 aa). The 2-C-methyl-D-erythritol 2,4-cyclodiphosphate synthase stretch occupies residues 248-408; that stretch reads RVGNGYDVHG…TVAYPGSLGN (161 aa). Residues D254 and H256 each coordinate a divalent metal cation. 4-CDP-2-C-methyl-D-erythritol 2-phosphate-binding positions include 254–256 and 280–281; these read DVH and HS. Residue H288 coordinates a divalent metal cation. Residues 302–304, 378–381, F385, and R388 each bind 4-CDP-2-C-methyl-D-erythritol 2-phosphate; these read DIG and TTNE.

In the N-terminal section; belongs to the IspD/TarI cytidylyltransferase family. IspD subfamily. It in the C-terminal section; belongs to the IspF family. A divalent metal cation is required as a cofactor.

The enzyme catalyses 2-C-methyl-D-erythritol 4-phosphate + CTP + H(+) = 4-CDP-2-C-methyl-D-erythritol + diphosphate. It carries out the reaction 4-CDP-2-C-methyl-D-erythritol 2-phosphate = 2-C-methyl-D-erythritol 2,4-cyclic diphosphate + CMP. It participates in isoprenoid biosynthesis; isopentenyl diphosphate biosynthesis via DXP pathway; isopentenyl diphosphate from 1-deoxy-D-xylulose 5-phosphate: step 2/6. The protein operates within isoprenoid biosynthesis; isopentenyl diphosphate biosynthesis via DXP pathway; isopentenyl diphosphate from 1-deoxy-D-xylulose 5-phosphate: step 4/6. Its function is as follows. Bifunctional enzyme that catalyzes the formation of 4-diphosphocytidyl-2-C-methyl-D-erythritol from CTP and 2-C-methyl-D-erythritol 4-phosphate (MEP) (IspD), and catalyzes the conversion of 4-diphosphocytidyl-2-C-methyl-D-erythritol 2-phosphate (CDP-ME2P) to 2-C-methyl-D-erythritol 2,4-cyclodiphosphate (ME-CPP) with a corresponding release of cytidine 5-monophosphate (CMP) (IspF). In Chelativorans sp. (strain BNC1), this protein is Bifunctional enzyme IspD/IspF.